Consider the following 343-residue polypeptide: MEPLVQQTERFSELLAVSCGSLVSTWDAEKVRRALQWARYLLHVYRRFAGRGRVREALERRLPARGGPLGLRSFAALESGDARLALRLLRNRALAPAAARALPSLLFPGPAADHRDDVPQSRLVLLARRGSALRLLCRLGGDAPRSALLRTHAELLDARLHELGGADSAAARKLLDTLWTRGPREHVLDVTAEALLLREEDPEPAQATDPAGADETQKLLRWLLESPEVLAAFCRHLPAKRLASVAGCHHALSRAYLDLLTTWATRLHYDLQKGAWVPTQMEDMPWEELCLRLQSLCHAQPFLQEEVLVTLRSRKALDGDFEVPGMSIWTDLLVVLECGIVLE.

In terms of assembly, belongs to the multisubunit FA complex composed of FANCA, FANCB, FANCC, FANCE, FANCF, FANCG, FANCL/PHF9 and FANCM. In complex with FANCA, FANCG and FANCL, but not with FANCC, nor FANCE, interacts with HES1; this interaction may be essential for the stability and nuclear localization of FA core complex proteins.

The protein localises to the nucleus. In terms of biological role, DNA repair protein that may operate in a postreplication repair or a cell cycle checkpoint function. May be implicated in interstrand DNA cross-link repair and in the maintenance of normal chromosome stability. The protein is Fanconi anemia group F protein of Mus musculus (Mouse).